We begin with the raw amino-acid sequence, 366 residues long: Histidinol-phosphate aminotransferase (366 aa).

Lysine 228 is modified (N6-(pyridoxal phosphate)lysine).

The protein belongs to the class-II pyridoxal-phosphate-dependent aminotransferase family. Histidinol-phosphate aminotransferase subfamily. In terms of assembly, homodimer. The cofactor is pyridoxal 5'-phosphate.

The catalysed reaction is L-histidinol phosphate + 2-oxoglutarate = 3-(imidazol-4-yl)-2-oxopropyl phosphate + L-glutamate. The protein operates within amino-acid biosynthesis; L-histidine biosynthesis; L-histidine from 5-phospho-alpha-D-ribose 1-diphosphate: step 7/9. This Corynebacterium glutamicum (strain ATCC 13032 / DSM 20300 / JCM 1318 / BCRC 11384 / CCUG 27702 / LMG 3730 / NBRC 12168 / NCIMB 10025 / NRRL B-2784 / 534) protein is Histidinol-phosphate aminotransferase.